Consider the following 114-residue polypeptide: MTQGQGFGFGLGKMKELAAAIQKAQQVQEGAKKLQEDLEKMEIEGVAAGGLVKVIMSGNQEPRRVEISPDLMSEGAEVVADLVTAAMKDAYLKSTTTMRERMEELTGGLSLPGM.

Belongs to the YbaB/EbfC family. In terms of assembly, homodimer.

It localises to the cytoplasm. It is found in the nucleoid. In terms of biological role, binds to DNA and alters its conformation. May be involved in regulation of gene expression, nucleoid organization and DNA protection. This is Nucleoid-associated protein Cyan7425_0899 from Cyanothece sp. (strain PCC 7425 / ATCC 29141).